The chain runs to 211 residues: Protein-L-isoaspartate O-methyltransferase (211 aa).

The active site involves Ser-62.

This sequence belongs to the methyltransferase superfamily. L-isoaspartyl/D-aspartyl protein methyltransferase family.

The protein resides in the cytoplasm. The enzyme catalyses [protein]-L-isoaspartate + S-adenosyl-L-methionine = [protein]-L-isoaspartate alpha-methyl ester + S-adenosyl-L-homocysteine. Functionally, catalyzes the methyl esterification of L-isoaspartyl residues in peptides and proteins that result from spontaneous decomposition of normal L-aspartyl and L-asparaginyl residues. It plays a role in the repair and/or degradation of damaged proteins. This Shewanella sp. (strain ANA-3) protein is Protein-L-isoaspartate O-methyltransferase.